The sequence spans 267 residues: 4-hydroxy-tetrahydrodipicolinate reductase (267 aa).

Position 10–15 (glycine 10–glutamine 15) interacts with NAD(+). Arginine 37 is an NADP(+) binding site. NAD(+)-binding positions include glycine 99–threonine 101 and threonine 122–valine 125. Catalysis depends on histidine 154, which acts as the Proton donor/acceptor. Histidine 155 provides a ligand contact to (S)-2,3,4,5-tetrahydrodipicolinate. The active-site Proton donor is lysine 158. Residue glycine 164 to threonine 165 participates in (S)-2,3,4,5-tetrahydrodipicolinate binding.

The protein belongs to the DapB family.

It is found in the cytoplasm. The catalysed reaction is (S)-2,3,4,5-tetrahydrodipicolinate + NAD(+) + H2O = (2S,4S)-4-hydroxy-2,3,4,5-tetrahydrodipicolinate + NADH + H(+). It catalyses the reaction (S)-2,3,4,5-tetrahydrodipicolinate + NADP(+) + H2O = (2S,4S)-4-hydroxy-2,3,4,5-tetrahydrodipicolinate + NADPH + H(+). It functions in the pathway amino-acid biosynthesis; L-lysine biosynthesis via DAP pathway; (S)-tetrahydrodipicolinate from L-aspartate: step 4/4. Its function is as follows. Catalyzes the conversion of 4-hydroxy-tetrahydrodipicolinate (HTPA) to tetrahydrodipicolinate. The polypeptide is 4-hydroxy-tetrahydrodipicolinate reductase (Ehrlichia canis (strain Jake)).